The sequence spans 439 residues: MRCSLRMQLLLLLGLCVFISRIQGQLIGGEEDEEDEEEEEEEEESVEDETPEDRLQRKNIKQDSTLSVDKLIAKYGYESEVHHVTTEDGYILTMHRIRKQGAPPFLLQHGLVDSSAGFVVMGPNVSLAYLLADHNYDVWLGNARGNRYSRNHTTLDPDESKFWDFSWHEIGMYDLPAMIDHVLKVTGFPKLHYAGHSQGCTSFFVMCSMRPAYNDKVVSMQALAPAVYAKETEDHPYIRAISLYFNSLVGSSIREMFNGEFRFLCRMTEETERLCIEAVFGIVGRNWNEFNRKMFPVILGHYPAGVAAKQVKHFIQIIKSGRFAPYSYSSNKNMQLYRDHLPPRYNLSLVTVPTFVYYSTNDLLCHPKDVESMCDDLGNVTGKYLVPQKEFNHMDFLWAIDVRKMLYRRMLQVLGKVPEGSPEEANRSRREIRGKFIRS.

The N-terminal stretch at 1-24 is a signal peptide; the sequence is MRCSLRMQLLLLLGLCVFISRIQG. The disordered stretch occupies residues 28–60; the sequence is GGEEDEEDEEEEEEEEESVEDETPEDRLQRKNI. A compositionally biased stretch (acidic residues) spans 29–51; the sequence is GEEDEEDEEEEEEEEESVEDETP. Residues N124 and N151 are each glycosylated (N-linked (GlcNAc...) asparagine). Residue S197 is the Charge relay system of the active site. N346 and N379 each carry an N-linked (GlcNAc...) asparagine glycan. The active-site Charge relay system is the H393. The N-linked (GlcNAc...) asparagine glycan is linked to N426.

The protein belongs to the AB hydrolase superfamily. Lipase family. As to expression, in 14 hours embryos expression is seen in the foregut/midgut boundary.

It localises to the secreted. Functionally, could be a digestive enzyme. The protein is Lipase 1 (Lip1) of Drosophila melanogaster (Fruit fly).